Consider the following 167-residue polypeptide: Ureidoglycolate lyase (167 aa).

This sequence belongs to the ureidoglycolate lyase family. Homodimer. Ni(2+) is required as a cofactor.

It catalyses the reaction (S)-ureidoglycolate = urea + glyoxylate. The protein operates within nitrogen metabolism; (S)-allantoin degradation. Functionally, catalyzes the catabolism of the allantoin degradation intermediate (S)-ureidoglycolate, generating urea and glyoxylate. Involved in the utilization of allantoin as nitrogen source. In Pseudomonas entomophila (strain L48), this protein is Ureidoglycolate lyase.